The primary structure comprises 324 residues: Concanavalin B (324 aa).

A signal peptide spans 1 to 25 (MGCERKALILMVVIWIMSFWTLSLA). One can recognise a GH18 domain in the interval 30-311 (TEIAVYWGQR…TNIIRYLNAT (282 aa)). Residue Asn-309 is glycosylated (N-linked (GlcNAc...) asparagine).

This sequence belongs to the glycosyl hydrolase 18 family.

Its function is as follows. May act as a carbohydrate-binding protein. In Canavalia ensiformis (Jack bean), this protein is Concanavalin B.